Consider the following 485-residue polypeptide: Protein DETOXIFICATION 14 (485 aa).

The next 12 membrane-spanning stretches (helical) occupy residues 30–50, 68–88, 112–132, 147–167, 175–195, 207–227, 259–279, 288–308, 329–349, 372–392, 405–425, and 432–452; these read LSYIAGPMIAVNSSMYVLQVI, IAVSFCSVTGFSVVFGLASAL, IVSLFLVCIPLSLLWTYIGDI, GKFATWLIPALFGYATLQPLV, LILPLVMSSVSSLCIHIVLCW, GAAIAIGVSYWLNVTVLGLYM, ASMICLEWWSFEFLVLLSGIL, VLSVCLSTQSSLYQIPESLGA, AVYTAMVITGVESIMVGAIVF, MAPLLSLSVIFDALHAALSGV, VNLAAYYLFGIPTAILLAFGF, and LWIGITVGSCVQAVLLGLIVI.

It belongs to the multi antimicrobial extrusion (MATE) (TC 2.A.66.1) family.

It is found in the membrane. The protein is Protein DETOXIFICATION 14 of Arabidopsis thaliana (Mouse-ear cress).